The following is a 463-amino-acid chain: Protoheme IX farnesyltransferase (463 aa).

The interval 1 to 193 (MAESRTFTGL…AYFRLMKPRL (193 aa)) is unknown. 4 consecutive transmembrane segments (helical) span residues 6-26 (TFTG…LAGA), 54-74 (LLVA…VVAM), 89-109 (AAII…AIVA), and 115-135 (ALPG…VLAL). The tract at residues 144–170 (GSDDETPVKNPTPAPEPAGDDTPDRTP) is disordered. 9 consecutive transmembrane segments (helical) span residues 193–213 (LMWL…GQTL), 218–238 (VLLT…FNHV), 265–285 (ALAF…QVNA), 286–306 (LVAV…TLVL), 314–334 (TVLG…AADG), 336–356 (VGLP…AHFY), 387–407 (IVYY…LTPL), 409–429 (WLYA…VVLL), and 441–461 (AFHA…VDAL). The interval 194 to 460 (MWLLCLVAAA…AVLIAIVVDA (267 aa)) is protoheme IX prenyltransferase.

In the C-terminal section; belongs to the UbiA prenyltransferase family. Protoheme IX farnesyltransferase subfamily.

The protein resides in the cell membrane. It carries out the reaction heme b + (2E,6E)-farnesyl diphosphate + H2O = Fe(II)-heme o + diphosphate. Its pathway is porphyrin-containing compound metabolism; heme O biosynthesis; heme O from protoheme: step 1/1. Its function is as follows. Converts heme B (protoheme IX) to heme O by substitution of the vinyl group on carbon 2 of heme B porphyrin ring with a hydroxyethyl farnesyl side group. The chain is Protoheme IX farnesyltransferase (ctaB) from Haloarcula marismortui (strain ATCC 43049 / DSM 3752 / JCM 8966 / VKM B-1809) (Halobacterium marismortui).